Reading from the N-terminus, the 380-residue chain is Pregnancy-associated glycoprotein 1 (380 aa).

Positions Met1–Cys15 are cleaved as a signal peptide. Positions Ile16–Phe53 are cleaved as a propeptide — activation peptide. Residues Asn57 and Asn74 are each glycosylated (N-linked (GlcNAc...) asparagine). The 307-residue stretch at Tyr71–Ala377 folds into the Peptidase A1 domain. Asp89 is an active-site residue. Cys102 and Cys107 are disulfide-bonded. Asn125 and Asn182 each carry an N-linked (GlcNAc...) asparagine glycan. The cysteines at positions 261 and 265 are disulfide-linked. Asp270 is an active-site residue. An intrachain disulfide couples Cys303 to Cys337.

It belongs to the peptidase A1 family. In terms of processing, N-Glycosylated; the glycans terminate in either N-acetyl-galactosamine (GalNAc) or N-acetyllactosamine. Terminal GalNAc on Asn-linked glycans is greatly reduced prior to parturition while lactosamine-type N-glycans remain unaltered. In terms of tissue distribution, trophoblast and placental tissue. Produced specifically in the invasive binucleate cells of the placenta. Becomes detectable in maternal serum soon after implantation.

It localises to the secreted. It is found in the extracellular space. In terms of biological role, appears to be proteolytically inactive. The protein is Pregnancy-associated glycoprotein 1 of Bos taurus (Bovine).